Here is a 283-residue protein sequence, read N- to C-terminus: Polyamine aminopropyltransferase (283 aa).

The 234-residue stretch at 5–238 folds into the PABS domain; it reads TTWIDEYHKG…GIWSWTFASS (234 aa). Gln32 serves as a coordination point for S-methyl-5'-thioadenosine. The spermidine site is built by His63 and Asp87. Residues Glu107 and 139–140 each bind S-methyl-5'-thioadenosine; that span reads DG. The Proton acceptor role is filled by Asp158. Residue 158–161 participates in spermidine binding; sequence DCSD.

The protein belongs to the spermidine/spermine synthase family. Homodimer or homotetramer.

It localises to the cytoplasm. It carries out the reaction S-adenosyl 3-(methylsulfanyl)propylamine + putrescine = S-methyl-5'-thioadenosine + spermidine + H(+). Its pathway is amine and polyamine biosynthesis; spermidine biosynthesis; spermidine from putrescine: step 1/1. In terms of biological role, catalyzes the irreversible transfer of a propylamine group from the amino donor S-adenosylmethioninamine (decarboxy-AdoMet) to putrescine (1,4-diaminobutane) to yield spermidine. This Prochlorococcus marinus (strain AS9601) protein is Polyamine aminopropyltransferase.